Reading from the N-terminus, the 722-residue chain is Neprilysin-1 (722 aa).

A signal peptide spans 1–17 (MAVALLVALCVVSSRMA). The 691-residue stretch at 32-722 (VCNSPVCQKA…MNPTHKCLLW (691 aa)) folds into the Peptidase M13 domain. Cystine bridges form between Cys33/Cys38, Cys56/Cys707, Cys64/Cys667, Cys120/Cys378, and Cys589/Cys719. N-linked (GlcNAc...) asparagine glycosylation is found at Asn100, Asn184, Asn207, and Asn424. Position 552 (His552) interacts with Zn(2+). Glu553 is a catalytic residue. His556 provides a ligand contact to Zn(2+). N-linked (GlcNAc...) asparagine glycosylation is present at Asn609. Glu614 serves as a coordination point for Zn(2+). Asp618 serves as the catalytic Proton donor.

The protein belongs to the peptidase M13 family. Zn(2+) serves as cofactor. Contains 5 disulfide bonds. Expressed by the venom gland.

The protein resides in the secreted. This is Neprilysin-1 from Trittame loki (Brush-footed trapdoor spider).